Reading from the N-terminus, the 528-residue chain is Probable protein phosphatase 2C 51 (528 aa).

The chain crosses the membrane as a helical span at residues S8 to C28. The 375-residue stretch at R71 to L445 folds into the PPM-type phosphatase domain. Mn(2+) contacts are provided by D117, G118, D385, and D436.

The protein belongs to the PP2C family. Mg(2+) is required as a cofactor. It depends on Mn(2+) as a cofactor.

It localises to the membrane. It catalyses the reaction O-phospho-L-seryl-[protein] + H2O = L-seryl-[protein] + phosphate. It carries out the reaction O-phospho-L-threonyl-[protein] + H2O = L-threonyl-[protein] + phosphate. The sequence is that of Probable protein phosphatase 2C 51 from Arabidopsis thaliana (Mouse-ear cress).